The following is a 375-amino-acid chain: Chaperone protein DnaJ (375 aa).

Residues Asp5–Gly70 form the J domain. The segment at Gly135–His213 adopts a CR-type zinc-finger fold. Positions 148, 151, 165, 168, 187, 190, 201, and 204 each coordinate Zn(2+). CXXCXGXG motif repeat units follow at residues Cys148–Gly155, Cys165–Gly172, Cys187–Gly194, and Cys201–Gly208.

It belongs to the DnaJ family. In terms of assembly, homodimer. The cofactor is Zn(2+).

It localises to the cytoplasm. In terms of biological role, participates actively in the response to hyperosmotic and heat shock by preventing the aggregation of stress-denatured proteins and by disaggregating proteins, also in an autonomous, DnaK-independent fashion. Unfolded proteins bind initially to DnaJ; upon interaction with the DnaJ-bound protein, DnaK hydrolyzes its bound ATP, resulting in the formation of a stable complex. GrpE releases ADP from DnaK; ATP binding to DnaK triggers the release of the substrate protein, thus completing the reaction cycle. Several rounds of ATP-dependent interactions between DnaJ, DnaK and GrpE are required for fully efficient folding. Also involved, together with DnaK and GrpE, in the DNA replication of plasmids through activation of initiation proteins. This is Chaperone protein DnaJ from Zymomonas mobilis subsp. mobilis (strain ATCC 31821 / ZM4 / CP4).